Reading from the N-terminus, the 432-residue chain is Glutamate-1-semialdehyde 2,1-aminomutase 1 (432 aa).

Lys-268 carries the N6-(pyridoxal phosphate)lysine modification.

The protein belongs to the class-III pyridoxal-phosphate-dependent aminotransferase family. HemL subfamily. In terms of assembly, homodimer. Requires pyridoxal 5'-phosphate as cofactor.

It is found in the cytoplasm. It catalyses the reaction (S)-4-amino-5-oxopentanoate = 5-aminolevulinate. Its pathway is porphyrin-containing compound metabolism; protoporphyrin-IX biosynthesis; 5-aminolevulinate from L-glutamyl-tRNA(Glu): step 2/2. This Bacillus cereus (strain ZK / E33L) protein is Glutamate-1-semialdehyde 2,1-aminomutase 1.